The sequence spans 1168 residues: Carboxylic acid reductase (1168 aa).

Residues H290, S385, E407 to G408, T412, D485, Y497 to R500, K506, and K606 each bind AMP. The Carrier domain occupies A645–R720. S679 is modified (O-(pantetheine 4'-phosphoryl)serine). Residues T777–L780, R804, R814, D844–K845, P870–A872, S910, Y946, and K950 contribute to the NADP(+) site.

The protein belongs to the ATP-dependent AMP-binding enzyme family. Carboxylic acid reductase subfamily. The cofactor is pantetheine 4'-phosphate.

It carries out the reaction a carboxylate + ATP + NADPH + H(+) = an aldehyde + AMP + diphosphate + NADP(+). The enzyme catalyses a medium-chain fatty acid + ATP + H(+) = a medium-chain fatty acyl-AMP + diphosphate. It catalyses the reaction a long-chain fatty acid + ATP + H(+) = a long-chain fatty acyl-AMP + diphosphate. The catalysed reaction is dodecanoate + ATP + H(+) = dodecanoyl-AMP + diphosphate. It carries out the reaction hexadecanoate + ATP + H(+) = hexadecanoyl-AMP + diphosphate. Its function is as follows. Catalyzes the ATP- and NADPH-dependent reduction of carboxylic acids to the corresponding aldehydes. In vitro, also catalyzes the activation of medium/long-chain fatty acids as acyl-adenylates (acyl-AMP). The protein is Carboxylic acid reductase of Mycobacterium tuberculosis (strain ATCC 25618 / H37Rv).